The following is a 327-amino-acid chain: MESVFDYEDIQLIPAKCIVRSRSECDTSVILGEHSFRLPVVPANMQTIIDENIALFLAQNGYFYIMHRFEPEKRLSFIKNMKSKGLFASISVGVKREEYDFIKQLAQENLSPEYITIDIAHGHSNTVIEMIQHIKKYLPKSFVIAGNVGTPEAVRELEHAGADATKVGIGPGKVCITKIKTGFGTGGWQLAALRWCSKAASKPIIADGGIRTPGDIAKSIRFGATMVMIGSLFAGHEESPGETIEKDGKLYKEYFGSASEFQKGEKRNVEGKKMFVEYKGPLKDTLIEMEQDLQSSISYAGGKSLDAIRTVDYVIVKNSIFNGDRIY.

Cys-175 (thioimidate intermediate) is an active-site residue. An NADP(+)-binding site is contributed by 204–227; it reads IIADGGIRTPGDIAKSIRFGATMV.

The protein belongs to the IMPDH/GMPR family. GuaC type 2 subfamily.

It catalyses the reaction IMP + NH4(+) + NADP(+) = GMP + NADPH + 2 H(+). Functionally, catalyzes the irreversible NADPH-dependent deamination of GMP to IMP. It functions in the conversion of nucleobase, nucleoside and nucleotide derivatives of G to A nucleotides, and in maintaining the intracellular balance of A and G nucleotides. This chain is GMP reductase, found in Clostridium acetobutylicum (strain ATCC 824 / DSM 792 / JCM 1419 / IAM 19013 / LMG 5710 / NBRC 13948 / NRRL B-527 / VKM B-1787 / 2291 / W).